The following is a 316-amino-acid chain: Biotin synthase (316 aa).

Positions 42 to 268 constitute a Radical SAM core domain; the sequence is LCGESVDLCT…INPTAYIRMA (227 aa). 3 residues coordinate [4Fe-4S] cluster: Cys-60, Cys-64, and Cys-67. [2Fe-2S] cluster-binding residues include Ser-104, Cys-136, Cys-196, and Arg-266.

This sequence belongs to the radical SAM superfamily. Biotin synthase family. In terms of assembly, homodimer. [4Fe-4S] cluster is required as a cofactor. It depends on [2Fe-2S] cluster as a cofactor.

The enzyme catalyses (4R,5S)-dethiobiotin + (sulfur carrier)-SH + 2 reduced [2Fe-2S]-[ferredoxin] + 2 S-adenosyl-L-methionine = (sulfur carrier)-H + biotin + 2 5'-deoxyadenosine + 2 L-methionine + 2 oxidized [2Fe-2S]-[ferredoxin]. It functions in the pathway cofactor biosynthesis; biotin biosynthesis; biotin from 7,8-diaminononanoate: step 2/2. Its function is as follows. Catalyzes the conversion of dethiobiotin (DTB) to biotin by the insertion of a sulfur atom into dethiobiotin via a radical-based mechanism. This chain is Biotin synthase, found in Clostridium beijerinckii (strain ATCC 51743 / NCIMB 8052) (Clostridium acetobutylicum).